We begin with the raw amino-acid sequence, 155 residues long: Ribonuclease H (155 aa).

Residues 1–142 (MLKQVEIFTD…CDELARAAAM (142 aa)) enclose the RNase H type-1 domain. Aspartate 10, glutamate 48, aspartate 70, and aspartate 134 together coordinate Mg(2+).

Belongs to the RNase H family. In terms of assembly, monomer. Mg(2+) serves as cofactor.

Its subcellular location is the cytoplasm. The catalysed reaction is Endonucleolytic cleavage to 5'-phosphomonoester.. Endonuclease that specifically degrades the RNA of RNA-DNA hybrids. In Escherichia coli O127:H6 (strain E2348/69 / EPEC), this protein is Ribonuclease H.